Consider the following 243-residue polypeptide: Phosphoribosylaminoimidazole-succinocarboxamide synthase (243 aa).

Belongs to the SAICAR synthetase family.

The enzyme catalyses 5-amino-1-(5-phospho-D-ribosyl)imidazole-4-carboxylate + L-aspartate + ATP = (2S)-2-[5-amino-1-(5-phospho-beta-D-ribosyl)imidazole-4-carboxamido]succinate + ADP + phosphate + 2 H(+). It functions in the pathway purine metabolism; IMP biosynthesis via de novo pathway; 5-amino-1-(5-phospho-D-ribosyl)imidazole-4-carboxamide from 5-amino-1-(5-phospho-D-ribosyl)imidazole-4-carboxylate: step 1/2. In Methanobrevibacter smithii (strain ATCC 35061 / DSM 861 / OCM 144 / PS), this protein is Phosphoribosylaminoimidazole-succinocarboxamide synthase.